Consider the following 362-residue polypeptide: tRNA-specific 2-thiouridylase MnmA (362 aa).

ATP is bound by residues 6–13 (AMSGGVDS) and Leu-32. Catalysis depends on Cys-101, which acts as the Nucleophile. Cysteines 101 and 197 form a disulfide. An ATP-binding site is contributed by Gly-125. Residues 147 to 149 (KDQ) form an interaction with tRNA region. The active-site Cysteine persulfide intermediate is Cys-197.

The protein belongs to the MnmA/TRMU family.

Its subcellular location is the cytoplasm. It carries out the reaction S-sulfanyl-L-cysteinyl-[protein] + uridine(34) in tRNA + AH2 + ATP = 2-thiouridine(34) in tRNA + L-cysteinyl-[protein] + A + AMP + diphosphate + H(+). Functionally, catalyzes the 2-thiolation of uridine at the wobble position (U34) of tRNA, leading to the formation of s(2)U34. The protein is tRNA-specific 2-thiouridylase MnmA of Saccharopolyspora erythraea (strain ATCC 11635 / DSM 40517 / JCM 4748 / NBRC 13426 / NCIMB 8594 / NRRL 2338).